A 500-amino-acid chain; its full sequence is Protein gar2 (500 aa).

2 stretches are compositionally biased toward basic and acidic residues: residues 1 to 41 (MAKK…KEIA) and 59 to 68 (KRASSPEPSK). Residues 1–262 (MAKKDKTSVK…TKPSQDSNET (262 aa)) form a disordered region. The span at 69-78 (KSVKKQKKSK) shows a compositional bias: basic residues. Positions 90-120 (ESSSSESESSSSESESSSSESESSSSESSSS) are enriched in low complexity. The segment covering 126 to 137 (VIVKTEEKKESS) has biased composition (basic and acidic residues). Ser143, Ser144, and Ser146 each carry phosphoserine. A compositionally biased stretch (basic and acidic residues) spans 152 to 163 (AVVKIEEKKESS). Residues 164 to 182 (SDSSSESSSSESESESSSS) are compositionally biased toward low complexity. Residues 191–201 (VEKTEEKKEGS) are compositionally biased toward basic and acidic residues. Over residues 202 to 218 (SESSSDSESSSDSSSES) the composition is skewed to low complexity. Acidic residues predominate over residues 219 to 233 (GDSDSSSDSESESSS). A compositionally biased stretch (basic and acidic residues) spans 234 to 250 (EDEKKRKAEPASEERPA). RRM domains are found at residues 263–341 (CTVF…LSNP) and 366–443 (DTVF…FSTP). The tract at residues 441–500 (STPRTGGGSRGGRGGFGGRGGFGGRGGFGGGRGRGRGGARSGNPNRGSVAPFSGNKVTFD) is disordered. Over residues 445 to 480 (TGGGSRGGRGGFGGRGGFGGRGGFGGGRGRGRGGAR) the composition is skewed to gly residues.

Belongs to the RRM GAR family.

It localises to the nucleus. The protein localises to the nucleolus. Helps the assembly of pre-ribosomal particles containing 18S rRNA. This Schizosaccharomyces pombe (strain 972 / ATCC 24843) (Fission yeast) protein is Protein gar2 (gar2).